We begin with the raw amino-acid sequence, 960 residues long: Ran GTPase-activating protein 2 (960 aa).

LRR repeat units lie at residues 69–92 (HLNL…LIAE), 132–156 (GCRL…LYNF), 162–185 (LYSL…VGKA), 227–254 (LGTL…AFRM), and 313–340 (RDCL…CFNS). The tract at residues 370 to 408 (NIDFGRRGDDELLSSDEEEEQGAEDASMEEDAFNTSRET) is disordered. Residues 380-401 (ELLSSDEEEEQGAEDASMEEDA) are compositionally biased toward acidic residues. LRR repeat units lie at residues 475-498 (ASSM…VIAK), 538-561 (GCKI…ALKD), 568-595 (SFSL…LTEC), and 663-685 (NRNL…KALA). Positions 777-819 (PENVNVGDEDDDLGSLDGDQEEYNSKSSDSEDADLDDDDEDDD) are disordered. Acidic residues-rich tracts occupy residues 783 to 798 (GDED…DQEE) and 806 to 819 (SEDA…EDDD).

Its subcellular location is the nucleus. Its function is as follows. GTPase system comprising ran-1, ran-2 and ran-3 is essential in nucleocytoplasmic trafficking. Ran-2 is a GTPase activator for the nuclear RAS-related regulatory protein Ran, converting it to the putatively inactive GDP-bound state. Required for correct chromosome alignment and segregation on the metaphase plate. The sequence is that of Ran GTPase-activating protein 2 (ran-2) from Caenorhabditis elegans.